A 184-amino-acid polypeptide reads, in one-letter code: Ribosome-recycling factor (184 aa).

This sequence belongs to the RRF family.

Its subcellular location is the cytoplasm. Functionally, responsible for the release of ribosomes from messenger RNA at the termination of protein biosynthesis. May increase the efficiency of translation by recycling ribosomes from one round of translation to another. This Clostridium botulinum (strain Okra / Type B1) protein is Ribosome-recycling factor.